A 508-amino-acid polypeptide reads, in one-letter code: Glycerol kinase (508 aa).

Thr-15 lines the ADP pocket. ATP contacts are provided by Thr-15, Ser-16, and Ser-17. Thr-15 is a sn-glycerol 3-phosphate binding site. Arg-19 is an ADP binding site. Sn-glycerol 3-phosphate is bound by residues Arg-85, Glu-86, Tyr-138, and Asp-251. Arg-85, Glu-86, Tyr-138, Asp-251, and Gln-252 together coordinate glycerol. ADP contacts are provided by Thr-273, Gly-317, and Gly-419. Positions 273, 317, and 419 each coordinate ATP.

It belongs to the FGGY kinase family.

The enzyme catalyses glycerol + ATP = sn-glycerol 3-phosphate + ADP + H(+). It participates in polyol metabolism; glycerol degradation via glycerol kinase pathway; sn-glycerol 3-phosphate from glycerol: step 1/1. Inhibited by fructose 1,6-bisphosphate (FBP). Key enzyme in the regulation of glycerol uptake and metabolism. Catalyzes the phosphorylation of glycerol to yield sn-glycerol 3-phosphate. The polypeptide is Glycerol kinase (Mycoplasma pneumoniae (strain ATCC 29342 / M129 / Subtype 1) (Mycoplasmoides pneumoniae)).